The sequence spans 1090 residues: RNA-directed RNA polymerase (1090 aa).

The 173-residue stretch at 506–678 folds into the RdRp catalytic domain; it reads LSYGDVTRYL…ALASLTGCEI (173 aa).

The protein belongs to the reoviridae RNA-directed RNA polymerase family. Interacts with VP3 (Potential). Interacts with VP2; this interaction activates VP1. Interacts with NSP5; this interaction is probably necessary for the formation of functional virus factories. Interacts with NSP2; this interaction is weak. It depends on Mg(2+) as a cofactor.

The protein resides in the virion. It catalyses the reaction RNA(n) + a ribonucleoside 5'-triphosphate = RNA(n+1) + diphosphate. In terms of biological role, RNA-directed RNA polymerase that is involved in both transcription and genome replication. Together with VP3 capping enzyme, forms an enzyme complex positioned near the channels situated at each of the five-fold vertices of the core. Following infection, the outermost layer of the virus is lost, leaving a double-layered particle (DLP) made up of the core and VP6 shell. VP1 then catalyzes the transcription of fully conservative plus-strand genomic RNAs that are extruded through the DLP's channels into the cytoplasm where they function as mRNAs for translation of viral proteins. One copy of each of the viral (+)RNAs is also recruited during core assembly, together with newly synthesized polymerase complexes and VP2. The polymerase of these novo-formed particles catalyzes the synthesis of complementary minus-strands leading to dsDNA formation. To do so, the polymerase specifically recognizes conserved 3' sequence(s) in plus-strand RNA templates. Once dsRNA synthesis is complete, the polymerase switches to the transcriptional mode, thus providing secondary transcription. In Rotavirus C (isolate RVC/Human/United Kingdom/Bristol/1989) (RV-C), this protein is RNA-directed RNA polymerase.